Reading from the N-terminus, the 297-residue chain is Phospholipid scramblase 2 (297 aa).

The proline-rich domain (PRD) stretch occupies residues 1–72 (MRSWNSLFCL…NQPGRPEGVP (72 aa)). Residues 1–276 (MRSWNSLFCL…IQFPRDLDVK (276 aa)) lie on the Cytoplasmic side of the membrane. Thr-149 bears the Phosphothreonine; by PKC mark. S-palmitoyl cysteine attachment occurs at residues Cys-172, Cys-173, Cys-174, Cys-176, and Cys-177. A helical membrane pass occupies residues 277 to 293 (MKAVMIGACFLIDYMFF). Residues 294 to 297 (ERTR) lie on the Extracellular side of the membrane.

The protein belongs to the phospholipid scramblase family. Ca(2+) is required as a cofactor. Expression of isoform 1 seems restricted to testis.

It localises to the membrane. The protein resides in the nucleus. It carries out the reaction a 1,2-diacyl-sn-glycero-3-phosphocholine(in) = a 1,2-diacyl-sn-glycero-3-phosphocholine(out). Functionally, may catalyze calcium-induced ATP-independent rapid bidirectional and non-specific movement of phospholipids (lipid scrambling or lipid flip-flop) between the inner and outer leaflet of the plasma membrane. Its function is as follows. Has no phospholipid scramblase activity, due to the lack of a N-terminal proline-rich domain. This chain is Phospholipid scramblase 2, found in Homo sapiens (Human).